Consider the following 359-residue polypeptide: MTIYNFSAGPALLPQDVLREAQRELTDWHGSGMSVMEMSHRGREFMSIHARAEADLRELLQIPDNYRVLFLQGGAHSQFSMVPMNLLRGKTTADYVITGHWGKVAIKEARCYGDMRIAATGEASGFNGIPPQSEWQPNPDAAYLHYVSNETIGGVQFPFIPESGVPLVCDMSSDFLSRPVDVSRFGLIFAGAQKNIGPAGLTLVIVREDLLGQTLPGTPTMFDYKIHADADSMYNTPPTYAIYMAGLVFQWLKDNGGVRGIQMRNEEKAGLLYHTIDSSDGFYRCPVDVECRSRMNVPFRLRTEVLEKRFVDEADMAGLLQLKGHRSVGGVRASIYNAMPFEGVKALVAFMAEFARRHG.

Arg-41 contributes to the L-glutamate binding site. The pyridoxal 5'-phosphate site is built by Trp-101, Thr-151, Asp-170, and Gln-193. Lys-194 bears the N6-(pyridoxal phosphate)lysine mark. 235–236 serves as a coordination point for pyridoxal 5'-phosphate; the sequence is NT.

Belongs to the class-V pyridoxal-phosphate-dependent aminotransferase family. SerC subfamily. Homodimer. Pyridoxal 5'-phosphate is required as a cofactor.

It is found in the cytoplasm. The catalysed reaction is O-phospho-L-serine + 2-oxoglutarate = 3-phosphooxypyruvate + L-glutamate. The enzyme catalyses 4-(phosphooxy)-L-threonine + 2-oxoglutarate = (R)-3-hydroxy-2-oxo-4-phosphooxybutanoate + L-glutamate. It functions in the pathway amino-acid biosynthesis; L-serine biosynthesis; L-serine from 3-phospho-D-glycerate: step 2/3. The protein operates within cofactor biosynthesis; pyridoxine 5'-phosphate biosynthesis; pyridoxine 5'-phosphate from D-erythrose 4-phosphate: step 3/5. Functionally, catalyzes the reversible conversion of 3-phosphohydroxypyruvate to phosphoserine and of 3-hydroxy-2-oxo-4-phosphonooxybutanoate to phosphohydroxythreonine. The chain is Phosphoserine aminotransferase from Laribacter hongkongensis (strain HLHK9).